The sequence spans 767 residues: GPI ethanolamine phosphate transferase 2 (767 aa).

N-linked (GlcNAc...) asparagine glycans are attached at residues Asn-186 and Asn-401. The next 2 helical transmembrane spans lie at 407 to 427 (LGLF…YGLG) and 434 to 454 (VTFL…SSYV). The N-linked (GlcNAc...) asparagine glycan is linked to Asn-490. 3 helical membrane-spanning segments follow: residues 513–533 (ILWA…CLNS), 538–558 (IWRS…LVFV), and 595–615 (IPIF…KMSA). N-linked (GlcNAc...) asparagine glycosylation occurs at Asn-627. A run of 3 helical transmembrane segments spans residues 655–675 (SVVL…IWWA), 695–715 (TLLT…CTML), and 733–755 (LAWT…SQVL).

It belongs to the PIGG/PIGN/PIGO family. PIGG subfamily.

It is found in the endoplasmic reticulum membrane. It functions in the pathway glycolipid biosynthesis; glycosylphosphatidylinositol-anchor biosynthesis. Ethanolamine phosphate transferase involved in glycosylphosphatidylinositol-anchor biosynthesis. Transfers ethanolamine phosphate to the GPI second mannose. This Aspergillus fumigatus (strain ATCC MYA-4609 / CBS 101355 / FGSC A1100 / Af293) (Neosartorya fumigata) protein is GPI ethanolamine phosphate transferase 2 (las21).